We begin with the raw amino-acid sequence, 308 residues long: N-acetyl-gamma-glutamyl-phosphate reductase (308 aa).

The active site involves Cys117.

It belongs to the NAGSA dehydrogenase family. Type 2 subfamily.

It localises to the cytoplasm. The enzyme catalyses N-acetyl-L-glutamate 5-semialdehyde + phosphate + NADP(+) = N-acetyl-L-glutamyl 5-phosphate + NADPH + H(+). The protein operates within amino-acid biosynthesis; L-arginine biosynthesis; N(2)-acetyl-L-ornithine from L-glutamate: step 3/4. Functionally, catalyzes the NADPH-dependent reduction of N-acetyl-5-glutamyl phosphate to yield N-acetyl-L-glutamate 5-semialdehyde. This chain is N-acetyl-gamma-glutamyl-phosphate reductase, found in Sinorhizobium fredii (strain NBRC 101917 / NGR234).